The following is a 390-amino-acid chain: Acid protease (390 aa).

The N-terminal stretch at 1–18 is a signal peptide; sequence MLFSKSLLLSVLASLSFA. Residues 75 to 386 form the Peptidase A1 domain; it reads YLTTIEIGTP…DIDNSQVGIA (312 aa). Catalysis depends on residues aspartate 93 and aspartate 282.

This sequence belongs to the peptidase A1 family.

This is Acid protease (PEP1) from Saccharomycopsis fibuligera (Yeast).